The sequence spans 63 residues: Ferredoxin (63 aa).

Positions 3-31 (WKVSVDVDTCIGDAICASLCPDVFEMGDD) constitute a 4Fe-4S ferredoxin-type domain. [4Fe-4S] cluster is bound by residues cysteine 12, aspartate 15, and cysteine 18. Cysteine 22 and cysteine 45 are joined by a disulfide. [4Fe-4S] cluster is bound at residue cysteine 53.

It depends on [4Fe-4S] cluster as a cofactor. [3Fe-4S] cluster serves as cofactor.

In terms of biological role, ferredoxins are iron-sulfur proteins that transfer electrons in a wide variety of metabolic reactions. In Thermococcus kodakarensis (strain ATCC BAA-918 / JCM 12380 / KOD1) (Pyrococcus kodakaraensis (strain KOD1)), this protein is Ferredoxin (fdxA).